We begin with the raw amino-acid sequence, 284 residues long: Diaminopimelate epimerase (284 aa).

Substrate-binding residues include Asn-13 and Asn-66. Catalysis depends on Cys-75, which acts as the Proton donor. Substrate-binding positions include 76–77 (GN), Asn-166, Asn-199, and 217–218 (ER). Cys-226 (proton acceptor) is an active-site residue. 227 to 228 (GT) contributes to the substrate binding site.

The protein belongs to the diaminopimelate epimerase family. Homodimer.

It localises to the cytoplasm. It carries out the reaction (2S,6S)-2,6-diaminopimelate = meso-2,6-diaminopimelate. It functions in the pathway amino-acid biosynthesis; L-lysine biosynthesis via DAP pathway; DL-2,6-diaminopimelate from LL-2,6-diaminopimelate: step 1/1. In terms of biological role, catalyzes the stereoinversion of LL-2,6-diaminopimelate (L,L-DAP) to meso-diaminopimelate (meso-DAP), a precursor of L-lysine and an essential component of the bacterial peptidoglycan. In Halothermothrix orenii (strain H 168 / OCM 544 / DSM 9562), this protein is Diaminopimelate epimerase.